Here is a 145-residue protein sequence, read N- to C-terminus: Ribosomal RNA large subunit methyltransferase H (145 aa).

Residues Leu64, Gly93, and 112-117 each bind S-adenosyl-L-methionine; that span reads LSALTF.

It belongs to the RNA methyltransferase RlmH family. In terms of assembly, homodimer.

It localises to the cytoplasm. It carries out the reaction pseudouridine(1915) in 23S rRNA + S-adenosyl-L-methionine = N(3)-methylpseudouridine(1915) in 23S rRNA + S-adenosyl-L-homocysteine + H(+). Specifically methylates the pseudouridine at position 1915 (m3Psi1915) in 23S rRNA. The chain is Ribosomal RNA large subunit methyltransferase H from Prochlorococcus marinus (strain SARG / CCMP1375 / SS120).